The chain runs to 321 residues: Leucine-rich repeat-containing protein 46 (321 aa).

4 LRR repeats span residues 45–66 (ELQT…EGLK), 67–88 (NLHS…ACVP), 89–110 (SLRF…LDLP), and 111–132 (CLQF…EFPQ). One can recognise an LRRCT domain in the interval 142–184 (NSCTNQDSYRELVIEALPLLLDLDGQPVMERWISDEEDEASSE). Phosphoserine is present on residues serine 175 and serine 182. Positions 198–222 (RGFLKELEQELSRHREHRQQAALTQ) form a coiled coil. The segment at 235–321 (NLPLLPGVPM…TKTMAKRSKK (87 aa)) is disordered.

The protein resides in the cell projection. The protein localises to the cilium. It is found in the flagellum. Required for normal spermatogenesis and male fertility. Plays an important role in sperm flagellum biogenesis. This Macaca fascicularis (Crab-eating macaque) protein is Leucine-rich repeat-containing protein 46 (LRRC46).